The chain runs to 270 residues: Putative pyruvate, phosphate dikinase regulatory protein (270 aa).

An ADP-binding site is contributed by glycine 151–threonine 158.

This sequence belongs to the pyruvate, phosphate/water dikinase regulatory protein family. PDRP subfamily.

It catalyses the reaction N(tele)-phospho-L-histidyl/L-threonyl-[pyruvate, phosphate dikinase] + ADP = N(tele)-phospho-L-histidyl/O-phospho-L-threonyl-[pyruvate, phosphate dikinase] + AMP + H(+). The catalysed reaction is N(tele)-phospho-L-histidyl/O-phospho-L-threonyl-[pyruvate, phosphate dikinase] + phosphate + H(+) = N(tele)-phospho-L-histidyl/L-threonyl-[pyruvate, phosphate dikinase] + diphosphate. Bifunctional serine/threonine kinase and phosphorylase involved in the regulation of the pyruvate, phosphate dikinase (PPDK) by catalyzing its phosphorylation/dephosphorylation. This is Putative pyruvate, phosphate dikinase regulatory protein from Ligilactobacillus salivarius (strain UCC118) (Lactobacillus salivarius).